Here is a 155-residue protein sequence, read N- to C-terminus: Fibroblast growth factor 2 (155 aa).

The propeptide occupies 1–9; it reads MAAGSITTL. The interval 1-20 is disordered; it reads MAAGSITTLPALPEDGGSSA. Heparin is bound at residue Asn36. Residues 46–48 carry the Cell attachment site; atypical motif; that stretch reads DGR. Position 82 is a phosphotyrosine; by TEC (Tyr82). A Cell attachment site; atypical motif is present at residues 88–90; it reads DGR. A Glycyl lysine isopeptide (Lys-Gly) (interchain with G-Cter in SUMO1) cross-link involves residue Lys95. Positions 128-144 are heparin-binding; that stretch reads KRTGQYKLGPKTGPGQK.

Belongs to the heparin-binding growth factors family. Monomer. Homodimer. Interacts with FGFR1, FGFR2, FGFR3 and FGFR4. Affinity between fibroblast growth factors (FGFs) and their receptors is increased by heparan sulfate glycosaminoglycans that function as coreceptors. Interacts with CSPG4, FGFBP1 and TEC. Found in a complex with FGFBP1, FGF1 and FGF2. Interacts with FGFBP3. Interacts with integrin ITGAV:ITGB3; the interaction is required for FGF2 signaling. Interacts with SNORC (via the extracellular domain). Interacts with glypican GPC3. Phosphorylation at Tyr-82 regulates FGF2 unconventional secretion.

It localises to the secreted. Its subcellular location is the nucleus. Its function is as follows. Acts as a ligand for FGFR1, FGFR2, FGFR3 and FGFR4. Also acts as an integrin ligand which is required for FGF2 signaling. Binds to integrin ITGAV:ITGB3. Plays an important role in the regulation of cell survival, cell division, cell differentiation and cell migration. Functions as a potent mitogen in vitro. Can induce angiogenesis. Mediates phosphorylation of ERK1/2 and thereby promotes retinal lens fiber differentiation. The protein is Fibroblast growth factor 2 (FGF2) of Ovis aries (Sheep).